A 945-amino-acid polypeptide reads, in one-letter code: Valine--tRNA ligase (945 aa).

The 'HIGH' region signature appears at 42-52 (PNVTGTLHMGH). The 'KMSKS' region signature appears at 552 to 556 (KMSKS). ATP is bound at residue K555. Residues 879–945 (DKATETARLS…VQTQLSKLKD (67 aa)) adopt a coiled-coil conformation.

This sequence belongs to the class-I aminoacyl-tRNA synthetase family. ValS type 1 subfamily. As to quaternary structure, monomer.

The protein localises to the cytoplasm. It catalyses the reaction tRNA(Val) + L-valine + ATP = L-valyl-tRNA(Val) + AMP + diphosphate. Functionally, catalyzes the attachment of valine to tRNA(Val). As ValRS can inadvertently accommodate and process structurally similar amino acids such as threonine, to avoid such errors, it has a 'posttransfer' editing activity that hydrolyzes mischarged Thr-tRNA(Val) in a tRNA-dependent manner. The polypeptide is Valine--tRNA ligase (Neisseria meningitidis serogroup A / serotype 4A (strain DSM 15465 / Z2491)).